The following is a 312-amino-acid chain: 1-phosphofructokinase (312 aa).

ATP is bound by residues 223-228 (SLGAEG) and 254-255 (GD). Asp255 serves as the catalytic Proton acceptor.

It belongs to the carbohydrate kinase PfkB family.

It carries out the reaction beta-D-fructose 1-phosphate + ATP = beta-D-fructose 1,6-bisphosphate + ADP + H(+). Its function is as follows. Catalyzes the ATP-dependent phosphorylation of fructose-l-phosphate to fructose-l,6-bisphosphate. The chain is 1-phosphofructokinase (fruK) from Escherichia coli O157:H7.